The primary structure comprises 304 residues: ATP synthase gamma chain (304 aa).

Belongs to the ATPase gamma chain family. In terms of assembly, F-type ATPases have 2 components, CF(1) - the catalytic core - and CF(0) - the membrane proton channel. CF(1) has five subunits: alpha(3), beta(3), gamma(1), delta(1), epsilon(1). CF(0) has three main subunits: a, b and c.

The protein resides in the cell membrane. In terms of biological role, produces ATP from ADP in the presence of a proton gradient across the membrane. The gamma chain is believed to be important in regulating ATPase activity and the flow of protons through the CF(0) complex. This Chloroherpeton thalassium (strain ATCC 35110 / GB-78) protein is ATP synthase gamma chain.